We begin with the raw amino-acid sequence, 616 residues long: Chaperone protein HscA (616 aa).

Belongs to the heat shock protein 70 family.

Chaperone involved in the maturation of iron-sulfur cluster-containing proteins. Has a low intrinsic ATPase activity which is markedly stimulated by HscB. Involved in the maturation of IscU. The sequence is that of Chaperone protein HscA from Proteus mirabilis (strain HI4320).